Reading from the N-terminus, the 129-residue chain is Large ribosomal subunit protein eL32 (129 aa).

The protein belongs to the eukaryotic ribosomal protein eL32 family.

The polypeptide is Large ribosomal subunit protein eL32 (rpl32e) (Methanosarcina mazei (strain ATCC BAA-159 / DSM 3647 / Goe1 / Go1 / JCM 11833 / OCM 88) (Methanosarcina frisia)).